An 889-amino-acid chain; its full sequence is MSEEPTTDMPTKYDPTAVEAGRYQTWLDQDLFKPSGDKKAKPYSIVIPPPNVTGKLHLGHAWDTTLQDIIIRQKRMQGFDTLWLPGMDHAGIATQAKVEAKLREQGISRYDLGREKFIQQVWDWKDEYASIIKQQWAKMGLSLDYSRERFTMDDGLSDAVKKVFVDLYNKGLIYRGEYIINWDPQARTALSDIEVIHKDDKGAFYHVKYPFADKDYTFNGKHYIEIATTRPETMMGDTAVAVNPSDDRYKELVGKKVILPLAEREIPIIADAYVDPEFGTGMVKITPAHDPNDFKVGNRHDLKRINTMNDDASMNANAGKYEGMDRFEARKAMVKDLEDQDLMIKIDPIVHSVGHSERTDVQVEARLSTQWFVKMKPLAEQALKNQEGDDAVDFIPKRFEDAFKQWMENIHDWVISRQLWWGHRIPAWYNKTTGETYVGVDGPKDPENWEQDPDVLDTWFSSALWPFSTMGWPNTDAEDFKRYFPTNTLVTGYDILPFWVSRMIFQSLEFTGRRPFKNVLLHGLIRDEHGVKMSKSLGNGIDPMDVIEKYGADALRWFLSNGSTAGQDVRFSYTKMDAAWNFINKIWNASRYVIMNLGTMDKPELPAASDWTLADKWILSRLNATVKQVTTTFDKFDFGEAGRALYNFIWNDFCDWYIEMSKEVLTGDDAQAKANTQNVLAYVLDQILRLLHPIMPFVTEKIWLSMPHVGESLVVAAYPVDHPEFDDETAESDMASLIELITAVRSIRAEANAKMSSAVDLLIKTDNTRLQAVFKANEDYIQRFAHPKTLSIGADVVAPKLAMTQVISDAEVYIPLAELVDLDEEVKKLEKEQAKFESEVARATKKLGNERFVANAPEDVVNSEKEKLADNQTKLAALKQRLVDIKAEA.

Residues 50 to 60 (PNVTGKLHLGH) carry the 'HIGH' region motif. Residues 532 to 536 (KMSKS) carry the 'KMSKS' region motif. Lys535 is a binding site for ATP. Residues 816–889 (LAELVDLDEE…QRLVDIKAEA (74 aa)) are a coiled coil.

Belongs to the class-I aminoacyl-tRNA synthetase family. ValS type 1 subfamily. Monomer.

It is found in the cytoplasm. The enzyme catalyses tRNA(Val) + L-valine + ATP = L-valyl-tRNA(Val) + AMP + diphosphate. Catalyzes the attachment of valine to tRNA(Val). As ValRS can inadvertently accommodate and process structurally similar amino acids such as threonine, to avoid such errors, it has a 'posttransfer' editing activity that hydrolyzes mischarged Thr-tRNA(Val) in a tRNA-dependent manner. The sequence is that of Valine--tRNA ligase from Lactiplantibacillus plantarum (strain ATCC BAA-793 / NCIMB 8826 / WCFS1) (Lactobacillus plantarum).